Here is a 265-residue protein sequence, read N- to C-terminus: Undecaprenyl-diphosphatase (265 aa).

Transmembrane regions (helical) follow at residues Met-1–Ile-21, Gln-39–Leu-61, Leu-85–Glu-105, Leu-115–Gly-135, Ile-149–Ile-169, Phe-187–Leu-207, Ala-218–Phe-238, and Ile-244–Phe-264.

Belongs to the UppP family.

It localises to the cell inner membrane. It carries out the reaction di-trans,octa-cis-undecaprenyl diphosphate + H2O = di-trans,octa-cis-undecaprenyl phosphate + phosphate + H(+). Functionally, catalyzes the dephosphorylation of undecaprenyl diphosphate (UPP). Confers resistance to bacitracin. The polypeptide is Undecaprenyl-diphosphatase (Nitrosococcus oceani (strain ATCC 19707 / BCRC 17464 / JCM 30415 / NCIMB 11848 / C-107)).